Here is a 51-residue protein sequence, read N- to C-terminus: Large ribosomal subunit protein eL39 (51 aa).

It belongs to the eukaryotic ribosomal protein eL39 family.

In Pyrobaculum islandicum (strain DSM 4184 / JCM 9189 / GEO3), this protein is Large ribosomal subunit protein eL39.